We begin with the raw amino-acid sequence, 172 residues long: Signal peptidase complex catalytic subunit SEC11 (172 aa).

Residues 1–15 (MVNFGAQSIRQTLVQ) are Cytoplasmic-facing. Residues 16–36 (LLGFAAIFTSSYMFYKGLSIV) form a helical; Signal-anchor for type II membrane protein membrane-spanning segment. Residues 37-172 (ANSESPLVVV…TGLLAFIQGE (136 aa)) are Lumenal-facing. Residues Ser50, His89, and Asp114 each act as charge relay system in the active site. Positions 158–169 (GLLGITGLLAFI) are C-terminal short (CTS) helix.

This sequence belongs to the peptidase S26B family. In terms of assembly, component of the signal peptidase complex (SPC) composed of a catalytic subunit SEC11 and three accessory subunits SPC1, SPC2 and SPC3. The complex induces a local thinning of the ER membrane which is used to measure the length of the signal peptide (SP) h-region of protein substrates. This ensures the selectivity of the complex towards h-regions shorter than 18-20 amino acids. SPC associates with the translocon complex.

The protein localises to the endoplasmic reticulum membrane. The catalysed reaction is Cleavage of hydrophobic, N-terminal signal or leader sequences from secreted and periplasmic proteins.. In terms of biological role, catalytic component of the signal peptidase complex (SPC) which catalyzes the cleavage of N-terminal signal sequences from nascent proteins as they are translocated into the lumen of the endoplasmic reticulum. Specifically cleaves N-terminal signal peptides that contain a hydrophobic alpha-helix (h-region) shorter than 18-20 amino acids. This Yarrowia lipolytica (strain CLIB 122 / E 150) (Yeast) protein is Signal peptidase complex catalytic subunit SEC11 (SEC11).